We begin with the raw amino-acid sequence, 82 residues long: MKTAISLPDETFDRVSRRASELGMSRSEFFTKAAQRYLHELDAQLLTGQIDRALESIHGTDEAEALAVANAYRVLETMDDEW.

Probably forms a complex with cognate toxin MazF2.

Functionally, antitoxin component of a type II toxin-antitoxin (TA) system. Labile antitoxin that binds to cognate MazF2 toxin and counteracts its endoribonuclease activity. This Mycobacterium bovis (strain ATCC BAA-935 / AF2122/97) protein is Antitoxin MazE2 (mazE2).